Here is a 1059-residue protein sequence, read N- to C-terminus: DNA (cytosine-5)-methyltransferase CMT1 (1059 aa).

Disordered regions lie at residues 1 to 196 and 230 to 272; these read MVPE…GALA and CVGE…DEAR. The segment covering 29–41 has biased composition (acidic residues); that stretch reads AEAEAVADLDEID. Composition is skewed to basic and acidic residues over residues 42–79, 92–129, and 147–157; these read REMS…EKAA, REMP…EKAA, and SRGKRQRGVEK. Over residues 158-167 the composition is skewed to basic residues; that stretch reads VKRRTRKKTA. Residues 252–262 show a composition bias toward basic and acidic residues; that stretch reads RRVEDSDDHFV. The BAH domain maps to 312 to 436; it reads EIYHLDDDVY…VAYSTFANLP (125 aa). Positions 479–1017 constitute an SAM-dependent MTase C5-type domain; it reads ASLLDLYSGC…YALGLAYRGE (539 aa). Residues 584 to 649 form the Chromo domain; sequence FDVEELLEIC…KGHKENILPL (66 aa). The active site involves cysteine 662.

This sequence belongs to the class I-like SAM-binding methyltransferase superfamily. C5-methyltransferase family.

It localises to the nucleus. It carries out the reaction a 2'-deoxycytidine in DNA + S-adenosyl-L-methionine = a 5-methyl-2'-deoxycytidine in DNA + S-adenosyl-L-homocysteine + H(+). In terms of biological role, involved in CpXpG DNA methylation. May not play a major role in maintaining CpXpG methylation. This chain is DNA (cytosine-5)-methyltransferase CMT1, found in Oryza sativa subsp. japonica (Rice).